The primary structure comprises 488 residues: GTPase Der (488 aa).

EngA-type G domains lie at 3-166 (PVVA…AEAM) and 199-372 (IKLA…DSAT). GTP contacts are provided by residues 9-16 (GRPNVGKS), 56-60 (DTGGI), 118-121 (NKVD), 205-212 (GKPNVGKS), 252-256 (DTAGV), and 317-320 (NKWD). The KH-like domain maps to 373-457 (RRVSTSMLTR…PIQLRFQEGD (85 aa)). Residues 469–488 (MSQERRRKRALSHIKDRKTK) are disordered. Over residues 473 to 488 (RRRKRALSHIKDRKTK) the composition is skewed to basic residues.

It belongs to the TRAFAC class TrmE-Era-EngA-EngB-Septin-like GTPase superfamily. EngA (Der) GTPase family. Associates with the 50S ribosomal subunit.

GTPase that plays an essential role in the late steps of ribosome biogenesis. This is GTPase Der from Shewanella sp. (strain W3-18-1).